The following is a 257-amino-acid chain: UPF0246 protein RSKD131_2757 (257 aa).

Belongs to the UPF0246 family.

The sequence is that of UPF0246 protein RSKD131_2757 from Cereibacter sphaeroides (strain KD131 / KCTC 12085) (Rhodobacter sphaeroides).